A 327-amino-acid chain; its full sequence is Small ribosomal subunit protein RACK1z (327 aa).

7 WD repeats span residues 13–44 (AHTD…ILWK), 61–91 (GHSH…RLWD), 103–133 (GHTK…KLWN), 148–180 (GHRD…KVWN), 192–222 (GHTG…LLWD), 233–262 (EANS…KIWD), and 293–323 (RKVI…RVWG).

It belongs to the WD repeat G protein beta family. Ribosomal protein RACK1 subfamily. As to quaternary structure, homodimer and heterodimer with RACK1B or RACK1C. Interacts with NUDT7. Interacts with GB1, MEKK1, MKK4, MKK5, MPK3 and MPK6, but not with GPA1 or MPK4. Interacts with OFUT20. As to expression, widely expressed.

The protein resides in the cytoplasm. It is found in the nucleus. In terms of biological role, major component of the RACK1 regulatory proteins that play a role in multiple signal transduction pathways. Involved in multiple hormone responses and developmental processes. MAPK cascade scaffolding protein involved in the protease IV and ArgC signaling pathway but not the flg22 pathway. The chain is Small ribosomal subunit protein RACK1z from Arabidopsis thaliana (Mouse-ear cress).